A 494-amino-acid chain; its full sequence is Ketol-acid reductoisomerase (NADP(+)) (494 aa).

In terms of domain architecture, KARI N-terminal Rossmann spans 14 to 208 (LDQLGRCRFM…GGHRAGCLES (195 aa)). NADP(+)-binding positions include 45-48 (CGAQ), Arg-68, Arg-76, Ser-78, and 108-110 (DKQ). His-132 is an active-site residue. Gly-158 contacts NADP(+). 2 KARI C-terminal knotted domains span residues 209–344 (SFVA…NYPD) and 345–487 (SSLE…MTDM). The Mg(2+) site is built by Asp-217, Glu-221, Glu-389, and Glu-393. Ser-414 provides a ligand contact to substrate.

Belongs to the ketol-acid reductoisomerase family. It depends on Mg(2+) as a cofactor.

It catalyses the reaction (2R)-2,3-dihydroxy-3-methylbutanoate + NADP(+) = (2S)-2-acetolactate + NADPH + H(+). The enzyme catalyses (2R,3R)-2,3-dihydroxy-3-methylpentanoate + NADP(+) = (S)-2-ethyl-2-hydroxy-3-oxobutanoate + NADPH + H(+). It functions in the pathway amino-acid biosynthesis; L-isoleucine biosynthesis; L-isoleucine from 2-oxobutanoate: step 2/4. Its pathway is amino-acid biosynthesis; L-valine biosynthesis; L-valine from pyruvate: step 2/4. Its function is as follows. Involved in the biosynthesis of branched-chain amino acids (BCAA). Catalyzes an alkyl-migration followed by a ketol-acid reduction of (S)-2-acetolactate (S2AL) to yield (R)-2,3-dihydroxy-isovalerate. In the isomerase reaction, S2AL is rearranged via a Mg-dependent methyl migration to produce 3-hydroxy-3-methyl-2-ketobutyrate (HMKB). In the reductase reaction, this 2-ketoacid undergoes a metal-dependent reduction by NADPH to yield (R)-2,3-dihydroxy-isovalerate. This chain is Ketol-acid reductoisomerase (NADP(+)), found in Aliivibrio salmonicida (strain LFI1238) (Vibrio salmonicida (strain LFI1238)).